Consider the following 168-residue polypeptide: 2-C-methyl-D-erythritol 2,4-cyclodiphosphate synthase (168 aa).

Residues Asp8 and His10 each contribute to the a divalent metal cation site. Residues 8–10 (DLH) and 34–35 (HS) each bind 4-CDP-2-C-methyl-D-erythritol 2-phosphate. Position 42 (His42) interacts with a divalent metal cation. 4-CDP-2-C-methyl-D-erythritol 2-phosphate contacts are provided by residues 56 to 58 (DIG), 61 to 65 (FPDTD), 132 to 135 (TTTE), and Arg142.

It belongs to the IspF family. As to quaternary structure, homotrimer. Requires a divalent metal cation as cofactor.

It carries out the reaction 4-CDP-2-C-methyl-D-erythritol 2-phosphate = 2-C-methyl-D-erythritol 2,4-cyclic diphosphate + CMP. It functions in the pathway isoprenoid biosynthesis; isopentenyl diphosphate biosynthesis via DXP pathway; isopentenyl diphosphate from 1-deoxy-D-xylulose 5-phosphate: step 4/6. Its function is as follows. Involved in the biosynthesis of isopentenyl diphosphate (IPP) and dimethylallyl diphosphate (DMAPP), two major building blocks of isoprenoid compounds. Catalyzes the conversion of 4-diphosphocytidyl-2-C-methyl-D-erythritol 2-phosphate (CDP-ME2P) to 2-C-methyl-D-erythritol 2,4-cyclodiphosphate (ME-CPP) with a corresponding release of cytidine 5-monophosphate (CMP). The sequence is that of 2-C-methyl-D-erythritol 2,4-cyclodiphosphate synthase from Desulfosudis oleivorans (strain DSM 6200 / JCM 39069 / Hxd3) (Desulfococcus oleovorans).